A 519-amino-acid chain; its full sequence is Na(+)/H(+) exchange regulatory cofactor NHE-RF3 (519 aa).

Residues 9–90 (ECKLSKQEGQ…SVTLLVLDGD (82 aa)) enclose the PDZ 1 domain. Residues S108, S148, S192, S250, S334, and S348 each carry the phosphoserine modification. 2 consecutive PDZ domains span residues 128–215 (EPCA…VDKE) and 243–323 (VVVI…LDKE). Residues 348 to 374 (SVKEGPAPIPAPLEATGSEPTEDAEGH) are disordered. Residues 378–458 (LCRLLKEDDS…HVTLLVCGKM (81 aa)) enclose the PDZ 4 domain. T451 and T488 each carry phosphothreonine. A disordered region spans residues 479-519 (VAGPDEKGETSAESEHDAHPAKDRTLSTASHSSSNSEDTEM). A compositionally biased stretch (basic and acidic residues) spans 482–503 (PDEKGETSAESEHDAHPAKDRT). Phosphoserine occurs at positions 489 and 492. Position 503 is a phosphothreonine (T503). Residues 505–519 (STASHSSSNSEDTEM) are compositionally biased toward low complexity. Phosphoserine is present on residues S508, S510, S511, S512, and S514.

It belongs to the NHER family. In terms of assembly, interacts with PDZK1IP1 and ABCC2. Binds to the C-terminal region of SLC26A3. Interacts (via C-terminal PDZ domain) with SLC26A6 (via C-terminal domain). Interacts (via C-terminal PDZ domain) with SLC9A3 (via C-terminal domain). Component of a complex, composed of PDZK1, SYNGAP1, KLHL17 and NMDA receptors. Interacts (via PDZ1 domain) directly with KLHL17; the interaction is important for integrity of actin cytoskeleton structures in neurons. Forms a heterodimeric complex with NHERF1. Interacts with AKAP2, BCR, CFTR, SLCO1A1, SLC22A12, SLC22A4, SLC22A5, SLC26A6, NHERF2 and SLC17A1. Interacts (via the first PDZ domain) with PTGIR (via non-isoprenylated C-terminus). Interacts (via PDZ domains 1 and 3) with SCARB1 (C-terminal domain). Interacts (via PDZ domains 1 and 3) with SLC5A8 (via PDZ-binding motif); interaction increases nicotinate transport activity of SLC5A8. As to expression, expressed in kidney, liver, small intestine. brain, lung, and testis (at protein level).

The protein localises to the membrane. Its subcellular location is the cell membrane. Functionally, a scaffold protein that connects plasma membrane proteins and regulatory components, regulating their surface expression in epithelial cells apical domains. May be involved in the coordination of a diverse range of regulatory processes for ion transport and second messenger cascades. In complex with NHERF1, may cluster proteins that are functionally dependent in a mutual fashion and modulate the trafficking and the activity of the associated membrane proteins. May play a role in the cellular mechanisms associated with multidrug resistance through its interaction with ABCC2 and PDZK1IP1. May potentiate the CFTR chloride channel activity. Required for normal cell-surface expression of SCARB1. Plays a role in maintaining normal plasma cholesterol levels via its effects on SCARB1. Plays a role in the normal localization and function of the chloride-anion exchanger SLC26A6 to the plasma membrane in the brush border of the proximal tubule of the kidney. May be involved in the regulation of proximal tubular Na(+)-dependent inorganic phosphate cotransport therefore playing an important role in tubule function. In Mus musculus (Mouse), this protein is Na(+)/H(+) exchange regulatory cofactor NHE-RF3 (Pdzk1).